A 430-amino-acid chain; its full sequence is Solanesyl-diphosphate synthase 1, mitochondrial (430 aa).

The transit peptide at 1-31 (MSWRWALARRVAALGATSGGGDGATAQAQRL) directs the protein to the mitochondrion. Isopentenyl diphosphate-binding residues include K133, R136, and H182. The Mg(2+) site is built by D189 and D193. R198 contributes to the an all-trans-polyprenyl diphosphate binding site. R199 is a binding site for isopentenyl diphosphate. An all-trans-polyprenyl diphosphate-binding residues include K275, T276, Q313, and K330.

Belongs to the FPP/GGPP synthase family. Homodimer. The cofactor is Mg(2+). As to expression, expressed in leaves, stems and roots. Highest expression in roots.

The protein resides in the mitochondrion. It catalyses the reaction 7 isopentenyl diphosphate + (2E)-geranyl diphosphate = all-trans-nonaprenyl diphosphate + 7 diphosphate. The protein operates within cofactor biosynthesis; ubiquinone biosynthesis. Involved in the supply of solanesyl diphosphate for ubiquinone-9 (UQ-9) biosynthesis in mitochondria. Farnesyl diphosphate is the preferred substrate. The chain is Solanesyl-diphosphate synthase 1, mitochondrial from Oryza sativa subsp. japonica (Rice).